The sequence spans 192 residues: Shikimate kinase (192 aa).

Residue 15-20 (GAGKTT) participates in ATP binding. Threonine 19 is a Mg(2+) binding site. Residues aspartate 37, arginine 61, and glycine 83 each contribute to the substrate site. Arginine 121 contributes to the ATP binding site. Residue arginine 140 coordinates substrate.

It belongs to the shikimate kinase family. As to quaternary structure, monomer. The cofactor is Mg(2+).

Its subcellular location is the cytoplasm. It carries out the reaction shikimate + ATP = 3-phosphoshikimate + ADP + H(+). It functions in the pathway metabolic intermediate biosynthesis; chorismate biosynthesis; chorismate from D-erythrose 4-phosphate and phosphoenolpyruvate: step 5/7. Functionally, catalyzes the specific phosphorylation of the 3-hydroxyl group of shikimic acid using ATP as a cosubstrate. This Cupriavidus pinatubonensis (strain JMP 134 / LMG 1197) (Cupriavidus necator (strain JMP 134)) protein is Shikimate kinase.